The following is a 920-amino-acid chain: Protein translocase subunit SecA (920 aa).

Residues Q85, G103–T107, and D514 each bind ATP. Positions 904, 906, 915, and 916 each coordinate Zn(2+).

It belongs to the SecA family. In terms of assembly, monomer and homodimer. Part of the essential Sec protein translocation apparatus which comprises SecA, SecYEG and auxiliary proteins SecDF-YajC and YidC. Zn(2+) is required as a cofactor.

The protein resides in the cell inner membrane. It localises to the cytoplasm. It carries out the reaction ATP + H2O + cellular proteinSide 1 = ADP + phosphate + cellular proteinSide 2.. Its function is as follows. Part of the Sec protein translocase complex. Interacts with the SecYEG preprotein conducting channel. Has a central role in coupling the hydrolysis of ATP to the transfer of proteins into and across the cell membrane, serving both as a receptor for the preprotein-SecB complex and as an ATP-driven molecular motor driving the stepwise translocation of polypeptide chains across the membrane. The polypeptide is Protein translocase subunit SecA (Janthinobacterium sp. (strain Marseille) (Minibacterium massiliensis)).